We begin with the raw amino-acid sequence, 162 residues long: Caveolin-2 (162 aa).

At 1–86 (MGLETEKADV…FEVSKYVIYK (86 aa)) the chain is on the cytoplasmic side. Residue tyrosine 19 is modified to Phosphotyrosine; by SRC. Residues serine 20, serine 23, and serine 36 each carry the phosphoserine modification. Positions 87–107 (FLTLLLAMPMAFAAGVLFATL) form an intramembrane region, helical. The Cytoplasmic segment spans residues 108–162 (SCLHIWIIMPFVKTCLMVLPSVQTIWKSVTDAVIAPLCSSVGRSFSSVSLQVSHD).

This sequence belongs to the caveolin family. Monomer or homodimer. Interacts with CAV1; the interaction forms a stable heterooligomeric complex that is required for targeting to lipid rafts and for caveolae formation. Tyrosine phosphorylated forms do not form heterooligomers with the Tyr-19-phosphorylated form existing as a monomer or dimer. Interacts (tyrosine phosphorylated form) with the SH2 domain-containing proteins, RASA1, NCK1 and SRC. Interacts (tyrosine phosphorylated form) with INSR. Interacts (Tyr-19 phosphorylated form) with MAPK1 (phosphorylated form); the interaction, promoted by insulin, leads to nuclear location and MAPK1 activation. Interacts with STAT3; the interaction is increased on insulin-induced tyrosine phosphorylation leading to STAT activation. Phosphorylated on serine and tyrosine residues. CAV1 promotes phosphorylation on Ser-23 which then targets the complex to the plasma membrane, lipid rafts and caveolae. Phosphorylation on Ser-36 appears to modulate mitosis in endothelial cells. Phosphorylation on Tyr-19 is required for insulin-induced phosphorylation of MAPK1 and DNA binding of STAT3. Tyrosine phosphorylation is induced by both EGF and insulin.

It is found in the nucleus. It localises to the cytoplasm. The protein resides in the golgi apparatus membrane. The protein localises to the cell membrane. Its subcellular location is the membrane. It is found in the caveola. In terms of biological role, may act as a scaffolding protein within caveolar membranes. Interacts directly with G-protein alpha subunits and can functionally regulate their activity. Acts as an accessory protein in conjunction with CAV1 in targeting to lipid rafts and driving caveolae formation. The Ser-36 phosphorylated form has a role in modulating mitosis in endothelial cells. Positive regulator of cellular mitogenesis of the MAPK signaling pathway. Required for the insulin-stimulated nuclear translocation and activation of MAPK1 and STAT3, and the subsequent regulation of cell cycle progression. In Canis lupus familiaris (Dog), this protein is Caveolin-2 (CAV2).